Reading from the N-terminus, the 183-residue chain is Large ribosomal subunit protein uL5 (183 aa).

Belongs to the universal ribosomal protein uL5 family. Part of the 50S ribosomal subunit; contacts the 5S rRNA and probably tRNA. Forms a bridge to the 30S subunit in the 70S ribosome.

Functionally, this is one of the proteins that bind and probably mediate the attachment of the 5S RNA into the large ribosomal subunit, where it forms part of the central protuberance. In the 70S ribosome it contacts protein S13 of the 30S subunit (bridge B1b), connecting the 2 subunits; this bridge is implicated in subunit movement. May contact the P site tRNA; the 5S rRNA and some of its associated proteins might help stabilize positioning of ribosome-bound tRNAs. In Thermococcus kodakarensis (strain ATCC BAA-918 / JCM 12380 / KOD1) (Pyrococcus kodakaraensis (strain KOD1)), this protein is Large ribosomal subunit protein uL5.